Reading from the N-terminus, the 157-residue chain is Short-type peptidyl-prolyl cis-trans isomerase (157 aa).

The 95-residue stretch at 1–95 (MINLIKKGDY…RDERLIQEIP (95 aa)) folds into the PPIase FKBP-type domain. Residues 86–137 (RDERLIQEIPKEMFADADFEPQEGMLILASGIPAKIIKVTDDTVTLDFNHEL) are IF.

It belongs to the FKBP-type PPIase family.

The protein resides in the cytoplasm. The enzyme catalyses [protein]-peptidylproline (omega=180) = [protein]-peptidylproline (omega=0). Functionally, catalyzes the cis-trans isomerization of peptidyl prolyl bonds and accelerates protein folding. Also exhibits chaperone-like activity. This chain is Short-type peptidyl-prolyl cis-trans isomerase, found in Methanocaldococcus jannaschii (strain ATCC 43067 / DSM 2661 / JAL-1 / JCM 10045 / NBRC 100440) (Methanococcus jannaschii).